Consider the following 219-residue polypeptide: Elongation factor Ts (219 aa).

The interval 82 to 85 (TDFV) is involved in Mg(2+) ion dislocation from EF-Tu.

This sequence belongs to the EF-Ts family.

It is found in the cytoplasm. Associates with the EF-Tu.GDP complex and induces the exchange of GDP to GTP. It remains bound to the aminoacyl-tRNA.EF-Tu.GTP complex up to the GTP hydrolysis stage on the ribosome. This is Elongation factor Ts from Anaeromyxobacter dehalogenans (strain 2CP-C).